Reading from the N-terminus, the 634-residue chain is Biosynthetic arginine decarboxylase (634 aa).

N6-(pyridoxal phosphate)lysine is present on Lys103. 283 to 293 contacts substrate; sequence FDVGGGLGVDY.

It belongs to the Orn/Lys/Arg decarboxylase class-II family. SpeA subfamily. The cofactor is Mg(2+). It depends on pyridoxal 5'-phosphate as a cofactor.

It catalyses the reaction L-arginine + H(+) = agmatine + CO2. It functions in the pathway amine and polyamine biosynthesis; agmatine biosynthesis; agmatine from L-arginine: step 1/1. Catalyzes the biosynthesis of agmatine from arginine. In Photorhabdus laumondii subsp. laumondii (strain DSM 15139 / CIP 105565 / TT01) (Photorhabdus luminescens subsp. laumondii), this protein is Biosynthetic arginine decarboxylase.